Here is a 123-residue protein sequence, read N- to C-terminus: Large ribosomal subunit protein uL14 (123 aa).

This sequence belongs to the universal ribosomal protein uL14 family. In terms of assembly, part of the 50S ribosomal subunit. Forms a cluster with proteins L3 and L19. In the 70S ribosome, L14 and L19 interact and together make contacts with the 16S rRNA in bridges B5 and B8.

Its function is as follows. Binds to 23S rRNA. Forms part of two intersubunit bridges in the 70S ribosome. This Histophilus somni (strain 129Pt) (Haemophilus somnus) protein is Large ribosomal subunit protein uL14.